The chain runs to 241 residues: Endodeoxyribonuclease NucC (241 aa).

Active-site residues include Asp-73, Glu-104, and Lys-106. Asp-73 and Glu-104 together coordinate Mg(2+).

This sequence belongs to the NucC endonuclease family. Self-oligomerizes. Forms homotrimers; in the presence of cAAA the trimers associate face-to-face to form homohexamers. The 2 cAAA-binding sites are on the exterior of the hexamer at the three-way junction, there are maximally 2 cyclic nucleotides per hexamer. Requires Mg(2+) as cofactor.

Its activity is regulated as follows. Activated by cAAA and to a lesser extent cAA; both cyclic nucleotides are products of its cognate CD-NTase. Cyclic nucleotide binding causes hexamerization. Functionally, effector DNase of a CBASS antivirus system. CBASS (cyclic oligonucleotide-based antiphage signaling system) provides immunity against bacteriophage. The CD-NTase protein synthesizes cyclic nucleotides in response to infection; these serve as specific second messenger signals. The signals activate a diverse range of effectors, leading to bacterial cell death and thus abortive phage infection. A type III-C(AAA) CBASS system. In terms of biological role, a cyclic nucleotide-activated dsDNase. In the presence of 3',3',3'-cyclic AMP-AMP-AMP (cAAA) and to a lesser extent cyclic-di-AMP (c-di-AMP), endonucleolytically degrades dsDNA. Binds one cAAA in a pocket on one surface of the trimer; cAAA binding promotes hexamerization which is probably necessary for nuclease activation. The nuclease digests dsDNA to about 50 bp lengths. DNA has been modeled to contact a pair of juxtaposed active sites (one from each layer of the hexamer), accounting for cleavage on both strands. The sequence is that of Endodeoxyribonuclease NucC from Pseudomonas aeruginosa.